The primary structure comprises 208 residues: Ribosome maturation factor RimP (208 aa).

This sequence belongs to the RimP family.

Its subcellular location is the cytoplasm. Its function is as follows. Required for maturation of 30S ribosomal subunits. In Bartonella tribocorum (strain CIP 105476 / IBS 506), this protein is Ribosome maturation factor RimP.